The primary structure comprises 187 residues: NADH-quinone oxidoreductase subunit B (187 aa).

Residues 1-10 (MTADHNRALH) are compositionally biased toward basic and acidic residues. A disordered region spans residues 1-22 (MTADHNRALHDAPTARGGEVRQ). Positions 66, 67, 131, and 161 each coordinate [4Fe-4S] cluster.

The protein belongs to the complex I 20 kDa subunit family. As to quaternary structure, NDH-1 is composed of 14 different subunits. Subunits NuoB, C, D, E, F, and G constitute the peripheral sector of the complex. It depends on [4Fe-4S] cluster as a cofactor.

The protein resides in the cell inner membrane. It catalyses the reaction a quinone + NADH + 5 H(+)(in) = a quinol + NAD(+) + 4 H(+)(out). Its function is as follows. NDH-1 shuttles electrons from NADH, via FMN and iron-sulfur (Fe-S) centers, to quinones in the respiratory chain. Couples the redox reaction to proton translocation (for every two electrons transferred, four hydrogen ions are translocated across the cytoplasmic membrane), and thus conserves the redox energy in a proton gradient. This is NADH-quinone oxidoreductase subunit B from Erythrobacter litoralis (strain HTCC2594).